A 371-amino-acid chain; its full sequence is Ubiquitin receptor RAD23b (371 aa).

Residues 1–79 (MKLTVKTLKG…LVVMLSKSKS (79 aa)) form the Ubiquitin-like domain. The span at 79–117 (SGGSAGQASVQTSSVSQPVSATTSSTKPAAPSTTQSSPV) shows a compositional bias: low complexity. Residues 79 to 142 (SGGSAGQASV…DTYGQAASTL (64 aa)) are disordered. Over residues 128-142 (PAAQTDTYGQAASTL) the composition is skewed to polar residues. The UBA 1 domain maps to 146 to 189 (SSLEQMVQQIMEMGGGSWDKETVTRALRAAYNNPERAVDYLYSG). An STI1 domain is found at 242–285 (GTLEFLRNNDQFQQLRTMVHSNPQILQPMLQELGKQNPQLLRLI). The UBA 2 domain maps to 325–365 (PAEQEAIQRLEAMGFDRALVIEAFLACDRNEELAANYLLEN).

Belongs to the RAD23 family. As to quaternary structure, interacts with 'Lys-48'-linked polyubiquitin chains. Interacts with RPN10 via its ubiquitin-like domain. Interacts with UBQ1, UBQ2, UBQ5, UBQ7, UBQ10, UBQ11 and IAA16. Binds to RAD4. In terms of tissue distribution, widely expressed in the whole plant.

Its subcellular location is the nucleus. The protein localises to the cytoplasm. Its function is as follows. May be involved in nucleotide excision repair. Binds and presumably selects ubiquitin-conjugates for destruction. Prefers multiubiquitin chains rather than single ubiquitins, with a binding affinity for 'Lys-48'-linked ubiquitin chains. Acts as a ubiquitin receptor that associates with the 26S proteasomal docking subunit RPN10 for the indirect recognition of ubiquitinated substrates of ubiquitin/26S proteasome-mediated proteolysis (UPP). Involved in UV tolerance in both roots and hypocotyls, specifically in dark conditions. This chain is Ubiquitin receptor RAD23b, found in Arabidopsis thaliana (Mouse-ear cress).